The sequence spans 184 residues: ATP synthase subunit b, chloroplastic (184 aa).

The chain crosses the membrane as a helical span at residues 27–49; the sequence is LATNLINLSVVFGVLIFFGKGVL.

The protein belongs to the ATPase B chain family. As to quaternary structure, F-type ATPases have 2 components, F(1) - the catalytic core - and F(0) - the membrane proton channel. F(1) has five subunits: alpha(3), beta(3), gamma(1), delta(1), epsilon(1). F(0) has four main subunits: a(1), b(1), b'(1) and c(10-14). The alpha and beta chains form an alternating ring which encloses part of the gamma chain. F(1) is attached to F(0) by a central stalk formed by the gamma and epsilon chains, while a peripheral stalk is formed by the delta, b and b' chains.

The protein localises to the plastid. It is found in the chloroplast thylakoid membrane. F(1)F(0) ATP synthase produces ATP from ADP in the presence of a proton or sodium gradient. F-type ATPases consist of two structural domains, F(1) containing the extramembraneous catalytic core and F(0) containing the membrane proton channel, linked together by a central stalk and a peripheral stalk. During catalysis, ATP synthesis in the catalytic domain of F(1) is coupled via a rotary mechanism of the central stalk subunits to proton translocation. Its function is as follows. Component of the F(0) channel, it forms part of the peripheral stalk, linking F(1) to F(0). The polypeptide is ATP synthase subunit b, chloroplastic (Aethionema cordifolium (Lebanon stonecress)).